The following is a 141-amino-acid chain: Large ribosomal subunit protein uL11 (141 aa).

This sequence belongs to the universal ribosomal protein uL11 family. In terms of assembly, part of the ribosomal stalk of the 50S ribosomal subunit. Interacts with L10 and the large rRNA to form the base of the stalk. L10 forms an elongated spine to which L12 dimers bind in a sequential fashion forming a multimeric L10(L12)X complex. One or more lysine residues are methylated.

In terms of biological role, forms part of the ribosomal stalk which helps the ribosome interact with GTP-bound translation factors. This is Large ribosomal subunit protein uL11 from Gloeothece citriformis (strain PCC 7424) (Cyanothece sp. (strain PCC 7424)).